Reading from the N-terminus, the 122-residue chain is Large ribosomal subunit protein uL14c (122 aa).

Belongs to the universal ribosomal protein uL14 family. As to quaternary structure, part of the 50S ribosomal subunit.

It localises to the plastid. The protein localises to the chloroplast. Functionally, binds to 23S rRNA. The protein is Large ribosomal subunit protein uL14c of Gracilaria tenuistipitata var. liui (Red alga).